The primary structure comprises 229 residues: Imidazoleglycerol-phosphate dehydratase (229 aa).

The protein belongs to the imidazoleglycerol-phosphate dehydratase family.

It carries out the reaction D-erythro-1-(imidazol-4-yl)glycerol 3-phosphate = 3-(imidazol-4-yl)-2-oxopropyl phosphate + H2O. Its pathway is amino-acid biosynthesis; L-histidine biosynthesis; L-histidine from 5-phospho-alpha-D-ribose 1-diphosphate: step 6/9. In Neurospora crassa (strain ATCC 24698 / 74-OR23-1A / CBS 708.71 / DSM 1257 / FGSC 987), this protein is Imidazoleglycerol-phosphate dehydratase.